The primary structure comprises 239 residues: Sugar fermentation stimulation protein homolog (239 aa).

It belongs to the SfsA family.

In Desulforamulus reducens (strain ATCC BAA-1160 / DSM 100696 / MI-1) (Desulfotomaculum reducens), this protein is Sugar fermentation stimulation protein homolog.